Reading from the N-terminus, the 256-residue chain is Omega-amidase YafV (256 aa).

The region spanning 4 to 234 (LKITLLQQPL…ATRIDAELSM (231 aa)) is the CN hydrolase domain. Catalysis depends on Glu42, which acts as the Proton acceptor. The active-site Proton donor is the Lys107. The active-site Nucleophile is Cys141.

It belongs to the carbon-nitrogen hydrolase superfamily. NIT1/NIT2 family.

The enzyme catalyses a monoamide of a dicarboxylate + H2O = a dicarboxylate + NH4(+). In terms of biological role, hydrolyzes alpha-ketoglutaramate (a-KGM) to alpha-ketoglutarate (alpha-KG) and ammonia, has weak activity on L-glutamine, almost no activity on deaminated glutathione (dGSH) and none on glutathione. May function as a metabolite repair enzyme. This is Omega-amidase YafV (yafV) from Escherichia coli (strain K12).